We begin with the raw amino-acid sequence, 147 residues long: Lysozyme C-1 (147 aa).

The first 18 residues, Met1–Gly18, serve as a signal peptide directing secretion. Residues Lys19 to Leu147 enclose the C-type lysozyme domain. Cystine bridges form between Cys24-Cys145, Cys48-Cys133, Cys82-Cys98, and Cys94-Cys112. Residues Glu53 and Asp70 contribute to the active site.

It belongs to the glycosyl hydrolase 22 family.

It is found in the secreted. The enzyme catalyses Hydrolysis of (1-&gt;4)-beta-linkages between N-acetylmuramic acid and N-acetyl-D-glucosamine residues in a peptidoglycan and between N-acetyl-D-glucosamine residues in chitodextrins.. Functionally, lysozymes have primarily a bacteriolytic function; those in tissues and body fluids are associated with the monocyte-macrophage system and enhance the activity of immunoagents. The polypeptide is Lysozyme C-1 (Anas platyrhynchos (Mallard)).